We begin with the raw amino-acid sequence, 213 residues long: Pyridoxine/pyridoxamine 5'-phosphate oxidase (213 aa).

Substrate-binding positions include arginine 8–tyrosine 11 and lysine 66. Residues arginine 61–lysine 66, tyrosine 76–threonine 77, arginine 82, lysine 83, and glutamine 105 each bind FMN. Residues tyrosine 123, arginine 127, and serine 131 each coordinate substrate. Residues glutamine 140–serine 141 and tryptophan 185 contribute to the FMN site. Residue arginine 191–histidine 193 participates in substrate binding. Arginine 195 contacts FMN.

The protein belongs to the pyridoxamine 5'-phosphate oxidase family. Homodimer. Requires FMN as cofactor.

It catalyses the reaction pyridoxamine 5'-phosphate + O2 + H2O = pyridoxal 5'-phosphate + H2O2 + NH4(+). The enzyme catalyses pyridoxine 5'-phosphate + O2 = pyridoxal 5'-phosphate + H2O2. It participates in cofactor metabolism; pyridoxal 5'-phosphate salvage; pyridoxal 5'-phosphate from pyridoxamine 5'-phosphate: step 1/1. The protein operates within cofactor metabolism; pyridoxal 5'-phosphate salvage; pyridoxal 5'-phosphate from pyridoxine 5'-phosphate: step 1/1. In terms of biological role, catalyzes the oxidation of either pyridoxine 5'-phosphate (PNP) or pyridoxamine 5'-phosphate (PMP) into pyridoxal 5'-phosphate (PLP). This chain is Pyridoxine/pyridoxamine 5'-phosphate oxidase, found in Pseudoalteromonas atlantica (strain T6c / ATCC BAA-1087).